The primary structure comprises 320 residues: Probable NAD(P)H-dependent D-xylose reductase xyl1 (320 aa).

Y50 functions as the Proton donor in the catalytic mechanism. H112 serves as a coordination point for substrate. Residues 167-168 (SN), 216-225 (SSFGPLSFLE), and 272-282 (KSNNPTRLSQN) each bind NAD(+).

It belongs to the aldo/keto reductase family.

The enzyme catalyses xylitol + NAD(+) = D-xylose + NADH + H(+). It catalyses the reaction xylitol + NADP(+) = D-xylose + NADPH + H(+). The protein operates within carbohydrate metabolism; D-xylose degradation. Functionally, catalyzes the initial reaction in the xylose utilization pathway by reducing D-xylose into xylitol. Xylose is a major component of hemicelluloses such as xylan. Most fungi utilize D-xylose via three enzymatic reactions, xylose reductase (XR), xylitol dehydrogenase (XDH), and xylulokinase, to form xylulose 5-phosphate, which enters pentose phosphate pathway. The polypeptide is Probable NAD(P)H-dependent D-xylose reductase xyl1 (xyl1) (Aspergillus terreus (strain NIH 2624 / FGSC A1156)).